Reading from the N-terminus, the 395-residue chain is Elongation factor Tu (395 aa).

In terms of domain architecture, tr-type G spans 10–204 (KPHLNIGTIG…AVDTWIELPE (195 aa)). Residues 19–26 (GHVDHGKT) are G1. A GTP-binding site is contributed by 19–26 (GHVDHGKT). T26 is a Mg(2+) binding site. The interval 60–64 (GITIN) is G2. The segment at 81–84 (DCPG) is G3. Residues 81–85 (DCPGH) and 136–139 (NKVD) each bind GTP. A G4 region spans residues 136–139 (NKVD). The tract at residues 174 to 176 (SAL) is G5.

This sequence belongs to the TRAFAC class translation factor GTPase superfamily. Classic translation factor GTPase family. EF-Tu/EF-1A subfamily. Monomer.

It is found in the cytoplasm. It catalyses the reaction GTP + H2O = GDP + phosphate + H(+). GTP hydrolase that promotes the GTP-dependent binding of aminoacyl-tRNA to the A-site of ribosomes during protein biosynthesis. The sequence is that of Elongation factor Tu from Christiangramia forsetii (strain DSM 17595 / CGMCC 1.15422 / KT0803) (Gramella forsetii).